A 417-amino-acid polypeptide reads, in one-letter code: Creatine kinase U-type, mitochondrial (417 aa).

Residues 1–39 (MAGPFSRLLSARPGLRLLALAGAGSLAAGFLLRPEPVRA) constitute a mitochondrion transit peptide. Residues 40–64 (ASERRRLYPPSAEYPDLRKHNNCMA) are cardiolipin-binding. The region spanning 45 to 131 (RLYPPSAEYP…FDPVIQERHN (87 aa)) is the Phosphagen kinase N-terminal domain. Residue Ser151 is modified to Phosphoserine. In terms of domain architecture, Phosphagen kinase C-terminal spans 158 to 400 (YVLSSRVRTG…NYLIDCERRL (243 aa)). 161–165 (SSRVR) contributes to the ATP binding site. Ser196 bears the Phosphoserine mark. At Thr213 the chain carries Phosphothreonine. An ATP-binding site is contributed by His224. At Ser232 the chain carries Phosphoserine. Residues Arg269, Arg325, 353–358 (RGTGGV), and Asp368 contribute to the ATP site. A Phosphothreonine modification is found at Thr355.

It belongs to the ATP:guanido phosphotransferase family. Exists as an octamer composed of four MTCK homodimers.

The protein localises to the mitochondrion inner membrane. It catalyses the reaction creatine + ATP = N-phosphocreatine + ADP + H(+). In terms of biological role, reversibly catalyzes the transfer of phosphate between ATP and various phosphogens (e.g. creatine phosphate). Creatine kinase isoenzymes play a central role in energy transduction in tissues with large, fluctuating energy demands, such as skeletal muscle, heart, brain and spermatozoa. This is Creatine kinase U-type, mitochondrial (CKMT1A) from Homo sapiens (Human).